Reading from the N-terminus, the 234-residue chain is Ribosomal RNA small subunit methyltransferase G (234 aa).

S-adenosyl-L-methionine is bound by residues glycine 74, phenylalanine 79, 125-126 (AE), and arginine 144.

Belongs to the methyltransferase superfamily. RNA methyltransferase RsmG family.

It is found in the cytoplasm. Its function is as follows. Specifically methylates the N7 position of a guanine in 16S rRNA. The polypeptide is Ribosomal RNA small subunit methyltransferase G (Roseiflexus castenholzii (strain DSM 13941 / HLO8)).